The primary structure comprises 154 residues: Large ribosomal subunit protein uL13 (154 aa).

The protein belongs to the universal ribosomal protein uL13 family. Part of the 50S ribosomal subunit.

In terms of biological role, this protein is one of the early assembly proteins of the 50S ribosomal subunit, although it is not seen to bind rRNA by itself. It is important during the early stages of 50S assembly. The chain is Large ribosomal subunit protein uL13 from Brucella melitensis biotype 2 (strain ATCC 23457).